A 201-amino-acid chain; its full sequence is Protease (201 aa).

Catalysis depends on residues His-55, Asp-72, and Cys-122.

This sequence belongs to the peptidase C5 family. As to quaternary structure, interacts with protease cofactor pVI-C; this interaction is necessary for protease activation.

The protein resides in the virion. Its subcellular location is the host nucleus. The enzyme catalyses Cleaves proteins of the adenovirus and its host cell at two consensus sites: -Yaa-Xaa-Gly-Gly-|-Xaa- and -Yaa-Xaa-Gly-Xaa-|-Gly- (in which Yaa is Met, Ile or Leu, and Xaa is any amino acid).. Its activity is regulated as follows. Requires DNA and protease cofactor for maximal activation. Inside nascent virions, becomes partially activated by binding to the viral DNA, allowing it to cleave the cofactor that binds to the protease and fully activates it. Actin, like the viral protease cofactor, seems to act as a cofactor in the cleavage of cytokeratin 18 and of actin itself. Functionally, cleaves viral precursor proteins (pTP, pIIIa, pVI, pVII, pVIII, and pX) inside newly assembled particles giving rise to mature virions. Protease complexed to its cofactor slides along the viral DNA to specifically locate and cleave the viral precursors. Mature virions have a weakened organization compared to the unmature virions, thereby facilitating subsequent uncoating. Without maturation, the particle lacks infectivity and is unable to uncoat. Late in adenovirus infection, in the cytoplasm, may participate in the cytoskeleton destruction. Cleaves host cell cytoskeletal keratins K7 and K18. The chain is Protease from Ovis aries (Sheep).